A 242-amino-acid polypeptide reads, in one-letter code: Leucyl/phenylalanyl-tRNA--protein transferase (242 aa).

This sequence belongs to the L/F-transferase family.

It is found in the cytoplasm. It catalyses the reaction N-terminal L-lysyl-[protein] + L-leucyl-tRNA(Leu) = N-terminal L-leucyl-L-lysyl-[protein] + tRNA(Leu) + H(+). The catalysed reaction is N-terminal L-arginyl-[protein] + L-leucyl-tRNA(Leu) = N-terminal L-leucyl-L-arginyl-[protein] + tRNA(Leu) + H(+). It carries out the reaction L-phenylalanyl-tRNA(Phe) + an N-terminal L-alpha-aminoacyl-[protein] = an N-terminal L-phenylalanyl-L-alpha-aminoacyl-[protein] + tRNA(Phe). Functions in the N-end rule pathway of protein degradation where it conjugates Leu, Phe and, less efficiently, Met from aminoacyl-tRNAs to the N-termini of proteins containing an N-terminal arginine or lysine. The protein is Leucyl/phenylalanyl-tRNA--protein transferase of Alcanivorax borkumensis (strain ATCC 700651 / DSM 11573 / NCIMB 13689 / SK2).